We begin with the raw amino-acid sequence, 78 residues long: Small ribosomal subunit protein uS17 (78 aa).

It belongs to the universal ribosomal protein uS17 family. Part of the 30S ribosomal subunit.

Functionally, one of the primary rRNA binding proteins, it binds specifically to the 5'-end of 16S ribosomal RNA. The sequence is that of Small ribosomal subunit protein uS17 from Wolbachia pipientis wMel.